Consider the following 142-residue polypeptide: Transcriptional regulator MraZ (142 aa).

2 SpoVT-AbrB domains span residues Glu-5–Glu-47 and Ala-76–Lys-119.

This sequence belongs to the MraZ family. Forms oligomers.

It localises to the cytoplasm. The protein localises to the nucleoid. The protein is Transcriptional regulator MraZ of Clostridium botulinum (strain Eklund 17B / Type B).